Consider the following 221-residue polypeptide: UPF0502 protein Sputw3181_2381 (221 aa).

The protein belongs to the UPF0502 family.

The protein is UPF0502 protein Sputw3181_2381 of Shewanella sp. (strain W3-18-1).